Reading from the N-terminus, the 146-residue chain is VHWSAEEKQLITGLWGKVNVADCGAEALARLLIVYPWTQRFFASFGNLSSPTAILGNPMVRAHGKKVLTSFGDAVKNLDNIKNTFSQLSELHCDKLHVDPENFRLLGDILIIVLAAHFSKDFTPECQAAWQKLVRVVAHALARKYH.

The 145-residue stretch at 2 to 146 (HWSAEEKQLI…VAHALARKYH (145 aa)) folds into the Globin domain. His63 and His92 together coordinate heme b.

It belongs to the globin family. In terms of assembly, heterotetramer of two alpha chains and two beta chains. Red blood cells.

Involved in oxygen transport from the lung to the various peripheral tissues. The sequence is that of Hemoglobin subunit beta (HBB) from Phasianus colchicus colchicus (Black-necked pheasant).